The primary structure comprises 869 residues: Protein translocase subunit SecA (869 aa).

ATP contacts are provided by residues glutamine 88, 106–110, and aspartate 509; that span reads GEGKT. The segment covering 818 to 840 has biased composition (basic and acidic residues); sequence QDEGLKFNQREGEDAPAVREKKI. The interval 818–869 is disordered; it reads QDEGLKFNQREGEDAPAVREKKIPRNSPCPCGSGKKYKDCCGKSGPKKGILA. Residues cysteine 846, cysteine 848, cysteine 857, and cysteine 858 each coordinate Zn(2+).

It belongs to the SecA family. In terms of assembly, monomer and homodimer. Part of the essential Sec protein translocation apparatus which comprises SecA, SecYEG and auxiliary proteins SecDF-YajC and YidC. It depends on Zn(2+) as a cofactor.

The protein resides in the cell inner membrane. The protein localises to the cytoplasm. The enzyme catalyses ATP + H2O + cellular proteinSide 1 = ADP + phosphate + cellular proteinSide 2.. In terms of biological role, part of the Sec protein translocase complex. Interacts with the SecYEG preprotein conducting channel. Has a central role in coupling the hydrolysis of ATP to the transfer of proteins into and across the cell membrane, serving as an ATP-driven molecular motor driving the stepwise translocation of polypeptide chains across the membrane. The protein is Protein translocase subunit SecA of Campylobacter curvus (strain 525.92).